Consider the following 68-residue polypeptide: Large ribosomal subunit protein uL30 (68 aa).

It belongs to the universal ribosomal protein uL30 family. Part of the 50S ribosomal subunit.

The protein is Large ribosomal subunit protein uL30 of Pseudarthrobacter chlorophenolicus (strain ATCC 700700 / DSM 12829 / CIP 107037 / JCM 12360 / KCTC 9906 / NCIMB 13794 / A6) (Arthrobacter chlorophenolicus).